The primary structure comprises 469 residues: MTRPVRTRFAPSPTGFIHLGNIRSALYPWAFARKMKGTFVLRIEDTDVERSSQEAVDAILEGMAWLGLDYDEGPYYQMQRMDRYREVLAQMQEKGLVYPCYMSTEELDALRERQRAAGEKPRYDGTWRPEPGKVLPEPPAGVAPVLRFRNPLTGTVAWDDAVKGRVEISNEELDDLVVARPDGTPMYNFCVVVDDLDMGITHVIRGDDHVNNTPRQINILRALGGEVPVYAHLPTVLNEQGEKMSKRHGAMSVMGYRDAGYLPEAVLNYLARLGWSHGDAEIFTREQFVEWFDLEHLGKSPAQYDHNKLNWLNNHYIKEADDARLAGLAKPFFAALGIDAGAIEQGPDLVSVMGLMKDRASTVKEIAENSAMFYRAPAPGADALAQHVTDAVRPALVEFAAALKTVEWTKEAIAAALKAVLGAHKLKMPQLAMPVRLLVAGTTHTPSIDAVLLLFGRDVVVSRIEAALA.

The short motif at Pro11–Asn21 is the 'HIGH' region element. The segment covering Gly118–Pro131 has biased composition (basic and acidic residues). The tract at residues Gly118–Pro138 is disordered. The 'KMSKS' region signature appears at Lys243–Arg247. ATP is bound at residue Lys246.

Belongs to the class-I aminoacyl-tRNA synthetase family. Glutamate--tRNA ligase type 1 subfamily. Monomer.

It is found in the cytoplasm. The enzyme catalyses tRNA(Glu) + L-glutamate + ATP = L-glutamyl-tRNA(Glu) + AMP + diphosphate. Catalyzes the attachment of glutamate to tRNA(Glu) in a two-step reaction: glutamate is first activated by ATP to form Glu-AMP and then transferred to the acceptor end of tRNA(Glu). The protein is Glutamate--tRNA ligase of Burkholderia thailandensis (strain ATCC 700388 / DSM 13276 / CCUG 48851 / CIP 106301 / E264).